Here is a 485-residue protein sequence, read N- to C-terminus: Glycogen synthase (485 aa).

An ADP-alpha-D-glucose-binding site is contributed by K20.

This sequence belongs to the glycosyltransferase 1 family. Bacterial/plant glycogen synthase subfamily.

It catalyses the reaction [(1-&gt;4)-alpha-D-glucosyl](n) + ADP-alpha-D-glucose = [(1-&gt;4)-alpha-D-glucosyl](n+1) + ADP + H(+). It functions in the pathway glycan biosynthesis; glycogen biosynthesis. In terms of biological role, synthesizes alpha-1,4-glucan chains using ADP-glucose. The protein is Glycogen synthase of Vibrio parahaemolyticus serotype O3:K6 (strain RIMD 2210633).